We begin with the raw amino-acid sequence, 350 residues long: MEPKRIREGYLVKKGSVFNTWKPMWVVLLEDGIEFYKKKSDNSPKGMIPLKGSTLTSPCQDFGKRMFVFKITTTKQQDHFFQAAFLEERDAWVRDIKKAIKCIEGGQKFARKSTRRSIRLPETIDLGALYLSMKDTEKGIKELNLEKDKKIFNHCFTGNCVIDWLVSNQSVRNRQEGLMIASSLLNEGYLQPAGDMSKSAVDGTAENPFLDNPDAFYYFPDSGFFCEENSSDDDVILKEEFRGVIIKQGCLLKQGHRRKNWKVRKFILREDPAYLHYYDPAGAEDPLGAIHLRGCVVTSVESNSNGRKSEEENLFEIITADEVHYFLQAATPKERTEWIRAIQMASRTGK.

One can recognise a PH 1 domain in the interval 4 to 101 (KRIREGYLVK…WVRDIKKAIK (98 aa)). N6-acetyllysine is present on Lys-64. Ser-113 and Ser-117 each carry phosphoserine; by PKC. In terms of domain architecture, DEP spans 136-221 (TEKGIKELNL…NPDAFYYFPD (86 aa)). One can recognise a PH 2 domain in the interval 244-347 (VIIKQGCLLK…WIRAIQMASR (104 aa)).

Its function is as follows. Major protein kinase C substrate of platelets. The sequence is that of Pleckstrin (PLEK) from Homo sapiens (Human).